The following is a 328-amino-acid chain: Aspartate carbamoyltransferase catalytic subunit (328 aa).

The carbamoyl phosphate site is built by arginine 55 and threonine 56. Lysine 83 lines the L-aspartate pocket. The carbamoyl phosphate site is built by arginine 105, histidine 135, and glutamine 138. Arginine 176 and arginine 230 together coordinate L-aspartate. Carbamoyl phosphate is bound by residues glycine 271 and proline 272.

The protein belongs to the aspartate/ornithine carbamoyltransferase superfamily. ATCase family. Heterododecamer (2C3:3R2) of six catalytic PyrB chains organized as two trimers (C3), and six regulatory PyrI chains organized as three dimers (R2).

It catalyses the reaction carbamoyl phosphate + L-aspartate = N-carbamoyl-L-aspartate + phosphate + H(+). It participates in pyrimidine metabolism; UMP biosynthesis via de novo pathway; (S)-dihydroorotate from bicarbonate: step 2/3. Catalyzes the condensation of carbamoyl phosphate and aspartate to form carbamoyl aspartate and inorganic phosphate, the committed step in the de novo pyrimidine nucleotide biosynthesis pathway. The protein is Aspartate carbamoyltransferase catalytic subunit of Streptomyces griseus subsp. griseus (strain JCM 4626 / CBS 651.72 / NBRC 13350 / KCC S-0626 / ISP 5235).